The following is a 189-amino-acid chain: Probable nicotinate-nucleotide adenylyltransferase (189 aa).

It belongs to the NadD family.

It catalyses the reaction nicotinate beta-D-ribonucleotide + ATP + H(+) = deamido-NAD(+) + diphosphate. Its pathway is cofactor biosynthesis; NAD(+) biosynthesis; deamido-NAD(+) from nicotinate D-ribonucleotide: step 1/1. Its function is as follows. Catalyzes the reversible adenylation of nicotinate mononucleotide (NaMN) to nicotinic acid adenine dinucleotide (NaAD). In Bacillus cereus (strain AH820), this protein is Probable nicotinate-nucleotide adenylyltransferase.